The following is a 364-amino-acid chain: Geissoschizine synthase (364 aa).

An Enoyl reductase (ER) domain is found at G24–I343. A Zn(2+)-binding site is contributed by C51. Residue N52 participates in NADP(+) binding. Zn(2+)-binding residues include H73, E74, C104, C107, C110, C118, and C168. L194, G196, L197, S216, T217, S218, K221, R261, V280, A282, S304, T306, and R351 together coordinate NADP(+).

Belongs to the zinc-containing alcohol dehydrogenase family. Class-III subfamily. As to quaternary structure, homodimer. Zn(2+) serves as cofactor.

It carries out the reaction (19E)-geissoschizine + NADP(+) = 4,21-dehydrogeissoschizine + NADPH. The catalysed reaction is (19E)-geissoschizine + NADPH + H(+) = (16R,19E)-isositsirikine + NADP(+). The enzyme catalyses (19E)-geissoschizine + NADPH + H(+) = (16R,19Z)-isositsirikine + NADP(+). The protein operates within alkaloid biosynthesis. An alcohol dehydrogenase involved in the biosynthesis of seco-iridoid and derivatives monoterpenoid indole alkaloids natural products. Catalyzes the production of geissoschizine and its conversion to (16R)-E-isositsirikine and (16R)-Z-isositsirikine. The polypeptide is Geissoschizine synthase (Alstonia scholaris (Dogbane)).